Consider the following 832-residue polypeptide: FAST kinase domain-containing protein 1, mitochondrial (832 aa).

One can recognise an RAP domain in the interval V765 to K825.

Belongs to the FAST kinase family.

It localises to the mitochondrion. May regulate the stability of some mitochondrial mRNA species. This is FAST kinase domain-containing protein 1, mitochondrial (fastkd1) from Xenopus laevis (African clawed frog).